We begin with the raw amino-acid sequence, 668 residues long: DNA ligase (668 aa).

Residues 32–36 (DSEYD), 81–82 (SL), and glutamate 110 each bind NAD(+). The active-site N6-AMP-lysine intermediate is lysine 112. 4 residues coordinate NAD(+): arginine 133, glutamate 167, lysine 283, and lysine 307. Residues cysteine 401, cysteine 404, cysteine 419, and cysteine 424 each contribute to the Zn(2+) site. One can recognise a BRCT domain in the interval 586–668 (QTDSEFNGKT…IQKQKEVENK (83 aa)).

It belongs to the NAD-dependent DNA ligase family. LigA subfamily. Mg(2+) is required as a cofactor. The cofactor is Mn(2+).

It carries out the reaction NAD(+) + (deoxyribonucleotide)n-3'-hydroxyl + 5'-phospho-(deoxyribonucleotide)m = (deoxyribonucleotide)n+m + AMP + beta-nicotinamide D-nucleotide.. Functionally, DNA ligase that catalyzes the formation of phosphodiester linkages between 5'-phosphoryl and 3'-hydroxyl groups in double-stranded DNA using NAD as a coenzyme and as the energy source for the reaction. It is essential for DNA replication and repair of damaged DNA. The protein is DNA ligase of Staphylococcus carnosus (strain TM300).